A 477-amino-acid polypeptide reads, in one-letter code: Argininosuccinate lyase (477 aa).

It belongs to the lyase 1 family. Argininosuccinate lyase subfamily.

Its subcellular location is the cytoplasm. The catalysed reaction is 2-(N(omega)-L-arginino)succinate = fumarate + L-arginine. The protein operates within amino-acid biosynthesis; L-arginine biosynthesis; L-arginine from L-ornithine and carbamoyl phosphate: step 3/3. In Corynebacterium diphtheriae (strain ATCC 700971 / NCTC 13129 / Biotype gravis), this protein is Argininosuccinate lyase.